The following is a 129-amino-acid chain: Protein Turandot C (129 aa).

A signal peptide spans 1–21; the sequence is MNASISLLCFALLLISPFCLG.

Belongs to the Turandot family.

It is found in the secreted. Functionally, a humoral factor that may play a role in stress tolerance. The protein is Protein Turandot C of Drosophila sechellia (Fruit fly).